We begin with the raw amino-acid sequence, 317 residues long: WSCD family member AAEL009094 (317 aa).

The chain crosses the membrane as a helical span at residues 8–28 (LFGLAGTILVYIGGILFLSFV). 3 N-linked (GlcNAc...) asparagine glycosylation sites follow: Asn-150, Asn-226, and Asn-232.

This sequence belongs to the WSCD family.

The protein localises to the membrane. This Aedes aegypti (Yellowfever mosquito) protein is WSCD family member AAEL009094.